A 303-amino-acid polypeptide reads, in one-letter code: 5-dehydro-4-deoxyglucarate dehydratase (303 aa).

Belongs to the DapA family.

It carries out the reaction 5-dehydro-4-deoxy-D-glucarate + H(+) = 2,5-dioxopentanoate + CO2 + H2O. Its pathway is carbohydrate acid metabolism; D-glucarate degradation; 2,5-dioxopentanoate from D-glucarate: step 2/2. The protein is 5-dehydro-4-deoxyglucarate dehydratase of Pseudomonas putida (Arthrobacter siderocapsulatus).